Reading from the N-terminus, the 73-residue chain is Large ribosomal subunit protein bL31 (73 aa).

The Zn(2+) site is built by Cys-16, Cys-18, Cys-37, and Cys-40.

It belongs to the bacterial ribosomal protein bL31 family. Type A subfamily. In terms of assembly, part of the 50S ribosomal subunit. Requires Zn(2+) as cofactor.

Binds the 23S rRNA. In Blochmanniella floridana, this protein is Large ribosomal subunit protein bL31.